A 234-amino-acid chain; its full sequence is Small ribosomal subunit protein eS4 (234 aa).

In terms of domain architecture, S4 RNA-binding spans 39–102 (MPLVVVLRDL…NANYRVVIGM (64 aa)).

Belongs to the eukaryotic ribosomal protein eS4 family.

This Methanocella arvoryzae (strain DSM 22066 / NBRC 105507 / MRE50) protein is Small ribosomal subunit protein eS4.